We begin with the raw amino-acid sequence, 620 residues long: Glutathione-regulated potassium-efflux system protein KefC (620 aa).

Helical transmembrane passes span 4 to 24, 26 to 46, 54 to 74, 90 to 110, 114 to 134, 149 to 169, 178 to 198, 218 to 238, 270 to 290, 294 to 314, 327 to 347, and 359 to 379; these read HTLI…PIAV, LGLG…PWGL, SILH…GLEL, GALQ…LLGL, VAEL…MQAM, FAVL…IPLL, MGAF…VVLL, VFSA…EEVG, GLLL…GTLI, LRIV…LWLI, WFAV…GAAQ, and SLTL…VILN. The 120-residue stretch at 399–518 folds into the RCK N-terminal domain; sequence QPRVIIAGFG…AGVEKPERET (120 aa). Residues 597 to 620 are disordered; sequence GWQGTEEGKHTGNMADEPETKPSS.

Belongs to the monovalent cation:proton antiporter 2 (CPA2) transporter (TC 2.A.37) family. KefC subfamily. In terms of assembly, homodimer. Interacts with the regulatory subunit KefF.

It is found in the cell inner membrane. Its function is as follows. Pore-forming subunit of a potassium efflux system that confers protection against electrophiles. Catalyzes K(+)/H(+) antiport. The sequence is that of Glutathione-regulated potassium-efflux system protein KefC from Escherichia coli O17:K52:H18 (strain UMN026 / ExPEC).